We begin with the raw amino-acid sequence, 369 residues long: Beta-1,4-galactosyltransferase 2 (369 aa).

Residues Met1 to Ala15 lie on the Cytoplasmic side of the membrane. Residues Val16–Ala36 traverse the membrane as a helical; Signal-anchor for type II membrane protein segment. Over Gln37–Gly369 the chain is Lumenal. Residues Ser59–Gly75 show a composition bias toward polar residues. Positions Ser59–Val90 are disordered. N-linked (GlcNAc...) asparagine glycosylation is found at Asn63 and Asn68. The cysteines at positions 94 and 136 are disulfide-linked. UDP-alpha-D-galactose-binding positions include Pro147–Arg151, Phe186–Arg188, Val214–Asp215, and Trp275. An intrachain disulfide couples Cys208 to Cys227. Residue Asp215 coordinates Mn(2+). An N-acetyl-D-glucosamine-binding site is contributed by Gly277 to Asp280. His308 lines the Mn(2+) pocket. Residue His308–Arg310 coordinates UDP-alpha-D-galactose. Arg320 is an N-acetyl-D-glucosamine binding site. Asn354 is a glycosylation site (N-linked (GlcNAc...) asparagine).

The protein belongs to the glycosyltransferase 7 family. Requires Mn(2+) as cofactor.

It localises to the golgi apparatus. It is found in the golgi stack membrane. It carries out the reaction D-glucose + UDP-alpha-D-galactose = lactose + UDP + H(+). It catalyses the reaction an N-acetyl-beta-D-glucosaminyl derivative + UDP-alpha-D-galactose = a beta-D-galactosyl-(1-&gt;4)-N-acetyl-beta-D-glucosaminyl derivative + UDP + H(+). The catalysed reaction is N-acetyl-D-glucosamine + UDP-alpha-D-galactose = beta-D-galactosyl-(1-&gt;4)-N-acetyl-D-glucosamine + UDP + H(+). The protein operates within protein modification; protein glycosylation. Responsible for the synthesis of complex-type N-linked oligosaccharides in many glycoproteins as well as the carbohydrate moieties of glycolipids. Can produce lactose. This chain is Beta-1,4-galactosyltransferase 2 (B4GALT2), found in Cricetulus griseus (Chinese hamster).